Consider the following 189-residue polypeptide: GTP cyclohydrolase 1 (189 aa).

The Zn(2+) site is built by cysteine 78, histidine 81, and cysteine 150.

It belongs to the GTP cyclohydrolase I family. Toroid-shaped homodecamer, composed of two pentamers of five dimers.

The catalysed reaction is GTP + H2O = 7,8-dihydroneopterin 3'-triphosphate + formate + H(+). The protein operates within cofactor biosynthesis; 7,8-dihydroneopterin triphosphate biosynthesis; 7,8-dihydroneopterin triphosphate from GTP: step 1/1. In Listeria welshimeri serovar 6b (strain ATCC 35897 / DSM 20650 / CCUG 15529 / CIP 8149 / NCTC 11857 / SLCC 5334 / V8), this protein is GTP cyclohydrolase 1.